The chain runs to 544 residues: Serine/threonine-protein kinase PAK 1 (544 aa).

The disordered stretch occupies residues 1–77 (MSNNGLDIQD…KEKERPEISL (77 aa)). N-acetylserine is present on serine 2. Serine 21 is modified (phosphoserine; by PKB and autocatalysis). Positions 68 to 77 (KEKERPEISL) are enriched in basic and acidic residues. Positions 70 to 140 (KERPEISLPS…YNSKKTSNSQ (71 aa)) are autoregulatory region. One can recognise a CRIB domain in the interval 75–88 (ISLPSDFEHTIHVG). The tract at residues 75–105 (ISLPSDFEHTIHVGFDAVTGEFTGMPEQWAR) is GTPase-binding. Threonine 84 bears the Phosphothreonine; by OXSR1 mark. Serine 115 bears the Phosphoserine mark. Residues tyrosine 131 and tyrosine 142 each carry the phosphotyrosine modification. Serine 144 and serine 149 each carry phosphoserine; by autocatalysis. Tyrosine 153 is modified (phosphotyrosine; by JAK2). Residues 161–193 (VKAVSETPAVPPVSEDEDDDDDGTPPPVIAPRP) are disordered. Serine 174 is modified (phosphoserine). Positions 174-183 (SEDEDDDDDG) are enriched in acidic residues. A Phosphothreonine modification is found at threonine 184. Position 198 is a phosphoserine; by autocatalysis (serine 198). Tyrosine 200 is modified (phosphotyrosine; by JAK2). At serine 203 the chain carries Phosphoserine; by autocatalysis. Phosphothreonine is present on residues threonine 211 and threonine 218. Positions 212-250 (PTRDVATSPISPTENNTTPPDALTRNTEKQKKKPKMSDE) are disordered. Residues serine 219 and serine 222 each carry the phosphoserine modification. Over residues 219–230 (SPISPTENNTTP) the composition is skewed to polar residues. Residues threonine 224, threonine 228, and threonine 229 each carry the phosphothreonine modification. Positions 269–520 (YTRFEKIGQG…AKELLQHQFL (252 aa)) constitute a Protein kinase domain. 275 to 283 (IGQGASGTV) lines the ATP pocket. Tyrosine 284 is subject to Phosphotyrosine; by JAK2. ATP is bound at residue lysine 298. The Proton acceptor role is filled by aspartate 388. The residue at position 422 (threonine 422) is a Phosphothreonine; by autocatalysis, BRSK2 and PDPK1.

Belongs to the protein kinase superfamily. STE Ser/Thr protein kinase family. STE20 subfamily. As to quaternary structure, homodimer in its autoinhibited state. Active as monomer. Interacts with GIT1. Component of cytoplasmic complexes, which also contains PXN, ARHGEF7 and GIT1. Interacts with NISCH. Interacts with DVL1; mediates the formation of a DVL1, MUSK and PAK1 ternary complex involved in AChR clustering. Binds to the caspase-cleaved p110 isoform of CDC2L1 and CDC2L2, p110C, but not the full-length proteins. Interacts with ARHGEF7. Interacts tightly with GTP-bound but not GDP-bound CDC42/P21 and RAC1. Probably found in a ternary complex composed of DSCAM, PAK1 and RAC1. Interacts with DSCAM (via cytoplasmic domain); the interaction is direct and enhanced in presence of RAC1. Interacts with SCRIB. Interacts with PDPK1. Interacts (via kinase domain) with RAF1. Interacts with NCK1 and NCK2. Interacts with TBCB. Interacts with BRSK2. Interacts with SNAI1. Interacts with CIB1 (via N-terminal region); the interaction is direct, promotes PAK1 activity and occurs in a calcium-dependent manner. Interacts with INPP5K. Interacts with gamma-tubulin. Interacts with RHOU; the interaction promotes PAK1 activation. Mg(2+) serves as cofactor. Autophosphorylated in trans, meaning that in a dimer, one kinase molecule phosphorylates the other one. Activated by autophosphorylation at Thr-422 in response to a conformation change, triggered by interaction with GTP-bound CDC42 or RAC1. Activated by phosphorylation at Thr-422 by BRSK2 and by PDPK1. Phosphorylated by JAK2 in response to PRL; this increases PAK1 kinase activity. Phosphorylated at Ser-21 by PKB/AKT; this reduces interaction with NCK1 and association with focal adhesion sites. Upon DNA damage, phosphorylated at Thr-211 and translocates to the nucleoplasm. Phosphorylated at tyrosine residues, which can be enhanced by NTN1.

Its subcellular location is the cytoplasm. The protein resides in the cell junction. It localises to the focal adhesion. It is found in the cell projection. The protein localises to the lamellipodium. Its subcellular location is the cell membrane. The protein resides in the ruffle membrane. It localises to the invadopodium. It is found in the nucleus. The protein localises to the nucleoplasm. Its subcellular location is the chromosome. The protein resides in the cytoskeleton. It localises to the microtubule organizing center. It is found in the centrosome. It carries out the reaction L-seryl-[protein] + ATP = O-phospho-L-seryl-[protein] + ADP + H(+). The catalysed reaction is L-threonyl-[protein] + ATP = O-phospho-L-threonyl-[protein] + ADP + H(+). Its activity is regulated as follows. Phosphorylation of Thr-84 by OXSR1 inhibits activation. Activated by binding small G proteins. Binding of GTP-bound CDC42 or RAC1 to the autoregulatory region releases monomers from the autoinhibited dimer, and enables activation by phosphorylation of Thr-422. Functionally, protein kinase involved in intracellular signaling pathways downstream of integrins and receptor-type kinases that plays an important role in cytoskeleton dynamics, in cell adhesion, migration, proliferation, apoptosis, mitosis, and in vesicle-mediated transport processes. Can directly phosphorylate BAD and protects cells against apoptosis. Activated by interaction with CDC42 and RAC1. Functions as a GTPase effector that links the Rho-related GTPases CDC42 and RAC1 to the JNK MAP kinase pathway. Phosphorylates and activates MAP2K1, and thereby mediates activation of downstream MAP kinases. Involved in the reorganization of the actin cytoskeleton, actin stress fibers and of focal adhesion complexes. Phosphorylates the tubulin chaperone TBCB and thereby plays a role in the regulation of microtubule biogenesis and organization of the tubulin cytoskeleton. Plays a role in the regulation of insulin secretion in response to elevated glucose levels. Part of a ternary complex that contains PAK1, DVL1 and MUSK that is important for MUSK-dependent regulation of AChR clustering during the formation of the neuromuscular junction (NMJ). Activity is inhibited in cells undergoing apoptosis, potentially due to binding of CDC2L1 and CDC2L2. Phosphorylates MYL9/MLC2. Phosphorylates RAF1 at 'Ser-338' and 'Ser-339' resulting in: activation of RAF1, stimulation of RAF1 translocation to mitochondria, phosphorylation of BAD by RAF1, and RAF1 binding to BCL2. Phosphorylates SNAI1 at 'Ser-246' promoting its transcriptional repressor activity by increasing its accumulation in the nucleus. In podocytes, promotes NR3C2 nuclear localization. Required for atypical chemokine receptor ACKR2-induced phosphorylation of LIMK1 and cofilin (CFL1) and for the up-regulation of ACKR2 from endosomal compartment to cell membrane, increasing its efficiency in chemokine uptake and degradation. In synapses, seems to mediate the regulation of F-actin cluster formation performed by SHANK3, maybe through CFL1 phosphorylation and inactivation. Plays a role in RUFY3-mediated facilitating gastric cancer cells migration and invasion. In response to DNA damage, phosphorylates MORC2 which activates its ATPase activity and facilitates chromatin remodeling. In neurons, plays a crucial role in regulating GABA(A) receptor synaptic stability and hence GABAergic inhibitory synaptic transmission through its role in F-actin stabilization. In hippocampal neurons, necessary for the formation of dendritic spines and excitatory synapses; this function is dependent on kinase activity and may be exerted by the regulation of actomyosin contractility through the phosphorylation of myosin II regulatory light chain (MLC). Along with GIT1, positively regulates microtubule nucleation during interphase. Phosphorylates FXR1, promoting its localization to stress granules and activity. Phosphorylates ILK on 'Thr-173' and 'Ser-246', promoting nuclear export of ILK. The polypeptide is Serine/threonine-protein kinase PAK 1 (Bos taurus (Bovine)).